The chain runs to 551 residues: HTH-type transcriptional regulator SgrR (551 aa).

Residues 1–116 form the HTH marR-type domain; the sequence is MPSARLQQQF…LVSHLGRSFR (116 aa). The segment at residues 26–49 is a DNA-binding region (H-T-H motif); the sequence is LNELAALLSCSRRHMRTLLNTMQD. The interval 163–492 is solute-binding; sequence ELEADIAHHW…IDWQADAARW (330 aa).

Its function is as follows. Activates the small RNA gene sgrS under glucose-phosphate stress conditions as well as yfdZ. Represses its own transcription under both stress and non-stress conditions. Might act as a sensor of the intracellular accumulation of phosphoglucose by binding these molecules in its C-terminal solute-binding domain. In Shigella flexneri serotype 5b (strain 8401), this protein is HTH-type transcriptional regulator SgrR.